The following is a 226-amino-acid chain: Triosephosphate isomerase (226 aa).

Substrate is bound at residue 12–14 (NFK). H96 functions as the Electrophile in the catalytic mechanism. The active-site Proton acceptor is the E144. Residues I149, G184, and 205–206 (AS) each bind substrate.

The protein belongs to the triosephosphate isomerase family. In terms of assembly, homotetramer; dimer of dimers.

It localises to the cytoplasm. It carries out the reaction D-glyceraldehyde 3-phosphate = dihydroxyacetone phosphate. It functions in the pathway carbohydrate biosynthesis; gluconeogenesis. The protein operates within carbohydrate degradation; glycolysis; D-glyceraldehyde 3-phosphate from glycerone phosphate: step 1/1. Its function is as follows. Involved in the gluconeogenesis. Catalyzes stereospecifically the conversion of dihydroxyacetone phosphate (DHAP) to D-glyceraldehyde-3-phosphate (G3P). The protein is Triosephosphate isomerase of Thermococcus kodakarensis (strain ATCC BAA-918 / JCM 12380 / KOD1) (Pyrococcus kodakaraensis (strain KOD1)).